A 111-amino-acid chain; its full sequence is Ribosome-binding factor A (111 aa).

The protein belongs to the RbfA family. In terms of assembly, monomer. Binds 30S ribosomal subunits, but not 50S ribosomal subunits or 70S ribosomes.

The protein resides in the cytoplasm. Functionally, one of several proteins that assist in the late maturation steps of the functional core of the 30S ribosomal subunit. Associates with free 30S ribosomal subunits (but not with 30S subunits that are part of 70S ribosomes or polysomes). Required for efficient processing of 16S rRNA. May interact with the 5'-terminal helix region of 16S rRNA. The sequence is that of Ribosome-binding factor A from Helicobacter pylori (strain P12).